Reading from the N-terminus, the 67-residue chain is Cell division protein ZapB (67 aa).

Residues 3-59 (LELLSKLETKIQTALETIELLKMELEEEKQKSIGLAEQNQQLSQDLNSWNEKVTGLV) adopt a coiled-coil conformation.

It belongs to the ZapB family. In terms of assembly, homodimer. The ends of the coiled-coil dimer bind to each other, forming polymers. Interacts with FtsZ.

It is found in the cytoplasm. In terms of biological role, non-essential, abundant cell division factor that is required for proper Z-ring formation. It is recruited early to the divisome by direct interaction with FtsZ, stimulating Z-ring assembly and thereby promoting cell division earlier in the cell cycle. Its recruitment to the Z-ring requires functional FtsA or ZipA. This Shewanella woodyi (strain ATCC 51908 / MS32) protein is Cell division protein ZapB.